We begin with the raw amino-acid sequence, 137 residues long: Large ribosomal subunit protein uL16 (137 aa).

It belongs to the universal ribosomal protein uL16 family. Part of the 50S ribosomal subunit.

Functionally, binds 23S rRNA and is also seen to make contacts with the A and possibly P site tRNAs. The polypeptide is Large ribosomal subunit protein uL16 (Ectopseudomonas mendocina (strain ymp) (Pseudomonas mendocina)).